The primary structure comprises 125 residues: MRLSSTTFVVLAAVLLASGTAVSKADETGVTNVNAVHSPNVLAGVDKRFLRSHHTEDGEAKLSNYDNEERNGLFGANTLSNMGKDTILRFQMFTKWKANGYLPKKIKDDIPRSLYKAYKIHYRMN.

The first 25 residues, M1 to A25, serve as a signal peptide directing secretion. The short motif at R48 to R70 is the RxLR-dEER element.

This sequence belongs to the RxLR effector family.

The protein resides in the secreted. It localises to the host cell. Its function is as follows. Effector that suppresses plant defense responses during the early stages of pathogen infection. Suppresses cell death induced by effectors and PAMPs in plant hosts. Triggers a hypersensitive response (HR) in the presence of Rps1d. Suppresses BAX-induced cell death and enhan,ced P.capsici infection in Nicotiana benthamiana. Also suppresses effector-triggered immunity induction by associating with Avr1b and Rps1b, suggesting a role in suppressing plant immunity. In Phytophthora sojae (strain P6497) (Soybean stem and root rot agent), this protein is RxLR effector protein Avh6.